The primary structure comprises 213 residues: LIM domain-containing protein PLIM2c (213 aa).

LIM zinc-binding domains follow at residues 9 to 69 (DKCK…LFKE) and 105 to 165 (DKCA…LFLE). The segment at 177–213 (ANHRRSTAEEDKTEPKEDEANPTEEETSDAAAEEHES) is disordered. The segment covering 182–195 (STAEEDKTEPKEDE) has biased composition (basic and acidic residues).

As to quaternary structure, interacts with F-actin. In terms of tissue distribution, exclusively expressed in pollen grains.

The protein localises to the cytoplasm. It is found in the cytoskeleton. In terms of biological role, binds to actin filaments and promotes cross-linking into thick bundles. Has an actin-stabilizing activity. Associates predominantly with long and dynamic actin bundles in the shank of growing pollen tubes. The actin regulatory activities are inhibited by pH &gt; 6.8 and/or high [Ca(2+)]. In Arabidopsis thaliana (Mouse-ear cress), this protein is LIM domain-containing protein PLIM2c.